The following is a 321-amino-acid chain: Peroxidase 70 (321 aa).

The N-terminal stretch at 1–25 is a signal peptide; the sequence is MASSSFTSLSVMVLLCLAAAAVASA. Q26 is subject to Pyrrolidone carboxylic acid. 4 disulfides stabilise this stretch: C36-C116, C69-C74, C122-C317, and C201-C226. H67 serves as the catalytic Proton acceptor. D68, V71, G73, D75, and S77 together coordinate Ca(2+). An N-linked (GlcNAc...) asparagine glycan is attached at N81. P164 contacts substrate. A glycan (N-linked (GlcNAc...) asparagine) is linked at N172. A heme b-binding site is contributed by H194. Position 195 (T195) interacts with Ca(2+). N210 carries N-linked (GlcNAc...) asparagine glycosylation. Residues D241, T244, and D249 each coordinate Ca(2+).

It belongs to the peroxidase family. Classical plant (class III) peroxidase subfamily. It depends on heme b as a cofactor. Ca(2+) serves as cofactor.

Its subcellular location is the secreted. It carries out the reaction 2 a phenolic donor + H2O2 = 2 a phenolic radical donor + 2 H2O. Its function is as follows. Removal of H(2)O(2), oxidation of toxic reductants, biosynthesis and degradation of lignin, suberization, auxin catabolism, response to environmental stresses such as wounding, pathogen attack and oxidative stress. These functions might be dependent on each isozyme/isoform in each plant tissue. This chain is Peroxidase 70 (PER70), found in Zea mays (Maize).